The following is an 856-amino-acid chain: DNA mismatch repair protein MutS (856 aa).

Residue 607 to 614 (GPNMSGKS) coordinates ATP.

Belongs to the DNA mismatch repair MutS family.

Functionally, this protein is involved in the repair of mismatches in DNA. It is possible that it carries out the mismatch recognition step. This protein has a weak ATPase activity. This Lactobacillus delbrueckii subsp. bulgaricus (strain ATCC BAA-365 / Lb-18) protein is DNA mismatch repair protein MutS.